We begin with the raw amino-acid sequence, 24 residues long: Protein YahV (24 aa).

The helical transmembrane segment at 4–24 (ILLNVLNIVFIGIAIILVIIC) threads the bilayer.

It is found in the cell inner membrane. The protein is Protein YahV of Escherichia coli (strain K12).